The primary structure comprises 431 residues: Peptidase B (431 aa).

Residues Lys196 and Asp201 each contribute to the Mn(2+) site. Lys208 is an active-site residue. Mn(2+) contacts are provided by Asp219, Asp278, and Glu280. The active site involves Arg282.

The protein belongs to the peptidase M17 family. In terms of assembly, homohexamer. Mn(2+) serves as cofactor.

Its subcellular location is the cytoplasm. The catalysed reaction is Release of an N-terminal amino acid, Xaa, from a peptide or arylamide. Xaa is preferably Glu or Asp but may be other amino acids, including Leu, Met, His, Cys and Gln.. Its function is as follows. Probably plays an important role in intracellular peptide degradation. The protein is Peptidase B of Vibrio atlanticus (strain LGP32) (Vibrio splendidus (strain Mel32)).